The primary structure comprises 421 residues: Ig-like V-type domain-containing protein FAM187A (421 aa).

Positions 1–18 (MNLAHTTVLLWAWGSLQA) are cleaved as a signal peptide. The Extracellular portion of the chain corresponds to 19-377 (FEIVEKENIF…VSFSDPETRA (359 aa)). The Ig-like V-type domain maps to 268-362 (PWLPQVPIQF…IAGFRLGVTS (95 aa)). A disulfide bridge links Cys290 with Cys346. A glycan (N-linked (GlcNAc...) asparagine) is linked at Asn318. The helical transmembrane segment at 378-398 (ALGLILIGYMLITVIFISIHL) threads the bilayer. Topologically, residues 399–421 (CRCCCYLFRFCPNFSPRLSRPQL) are cytoplasmic.

This sequence belongs to the FAM187 family.

The protein resides in the membrane. The sequence is that of Ig-like V-type domain-containing protein FAM187A (FAM187A) from Bos taurus (Bovine).